Reading from the N-terminus, the 80-residue chain is Sulfur carrier protein TusA (80 aa).

The active-site Cysteine persulfide intermediate is the cysteine 17.

The protein belongs to the sulfur carrier protein TusA family.

The protein resides in the cytoplasm. Its function is as follows. Sulfur carrier protein which probably makes part of a sulfur-relay system. The chain is Sulfur carrier protein TusA from Pseudomonas entomophila (strain L48).